Consider the following 1447-residue polypeptide: MHDAESTVDSLLKEIDNEMEQTKSNITQNGSEDTPHNWKLPLQEIGDDTMEMLVKHNTRSNATENSRGRSPSKMSTISNESLNLGLLRVNSELEESPAAVHQERIKNSVANGALGHANSPKVLNNLKNMAQDIDKLARDEEKPVKLSSSPLKFTLKSTQPLLSYPESPIHRSSIEIETNYDDEDEEEEDAYTCLTQSPQILHSPSRIPITNAVSINKLNLDFTLNPNESDKSLVSDTSVDSTGRELDTKTIPELPFCMSSTPEMTPVDEKCNLPSKLLNTSNNSHSDSRSPTASVEDLNISTNLPGADSSQNNPVTTDADALIENDVVRDLQQNMEHIDDAFDEKKVLDEGCSNEPVTFLGENDTRSIVYSNKGTNANVQEFSQEDSLAHSEPNFKDLNATSDDVWNEDKETDANISTSTKSEESYIADYKVTRQEDWDTKKLHQESEHANEQPAIIPQKDSSEETFTELNNESEFQRNSKDGEEYRIVQHEESLYGQRTKSSEENIINGSEIGVDHGEADEVNEPLAKTSAEEHDLSSSCEDQSVSEARNKDSIEEKEVETKDENIETEKDESEYHKVEENEESEHVPLLPPLPRWEEIQFNEPFIDENDTSNDSIDLTRSMKPSDYISIWHIQEEEIKSNSPESIANSQFSQQSSITTASTVDSKKDNGSTSFKFKPRIVSRSRIYNPKSRVSSLNYYDNEDYILSNSEWNALDPMRRNTLISKRIQDNIRTQKGHAPLIRPSVMKLNGEDSGFQNHFLEVEQPQEHENIPLSTHLSEQDITTNVGLDEQKLPTNTQDEAEISIREIESAGDITFNRGDLLSLSFDEELGQDFANFLDALDHDSTSFNHGPDDSSSFQRDSSKKSFNSLWESSYELKPPPSIRKQPIAPDVLQKLLESDTKDDADLEKIREERITEPRTGLGIGMLKTPVKDVSIALAASIKGYEASFSDTDSRPEGMNNSDAITLNMFDDFEEDKMTPSTPVRSISPIKRHVSSPFKVVKAGNKQENNEINIKAEEEIEPMTQQETDGLKQDIPPLLAQTKDNVEAKEETITQLEEPQDVEQEFPDMGTLYLSIKAISTLALYGTKSHRATYAIVFDNGENVVQTPWESLPYDGNIRINKEFELPIDFKGKAETSSASSERDSYKKCVITLKCKYEKPRHELVEIVDKVPVGKSFFGKTKYKFEKKYVQKKPKQDEWDYLFAQDGSFARCEIEINEEFLKNVAFNTSHMHYNMINKWSRIADKIHGSKRLYELPRKAPHKVASLDVEACFLERTSAFEQFPKQFSLVNKIVSKYKLQQNIYKEGYLLQDGGDLKGKIENRFFKLHGSQLSGYHEISRKAKIDINLLKVTKVLRNEDIQADNGGQRNFTDWVLFNECFQLVFDDGERITFNAECSNEEKSDWYNKLQEVVELNVFHQPWVKKYCEKLAEEEKTRTTGHNLKQDFN.

Residues 1-16 show a composition bias toward basic and acidic residues; sequence MHDAESTVDSLLKEID. 2 disordered regions span residues 1-37 and 57-76; these read MHDA…TPHN and NTRS…KMST. Phosphoserine is present on Ser-10. Composition is skewed to polar residues over residues 22 to 32 and 59 to 76; these read TKSNITQNGSE and RSNA…KMST. Ser-78, Ser-81, Ser-91, Ser-96, and Ser-167 each carry phosphoserine. Residues 272–316 are disordered; sequence NLPSKLLNTSNNSHSDSRSPTASVEDLNISTNLPGADSSQNNPVT. A compositionally biased stretch (polar residues) spans 277–316; sequence LLNTSNNSHSDSRSPTASVEDLNISTNLPGADSSQNNPVT. Phosphothreonine is present on Thr-365. Ser-367 carries the post-translational modification Phosphoserine. The disordered stretch occupies residues 444 to 588; the sequence is HQESEHANEQ…VEENEESEHV (145 aa). Over residues 475–494 the composition is skewed to basic and acidic residues; sequence EFQRNSKDGEEYRIVQHEES. Over residues 497-509 the composition is skewed to polar residues; it reads GQRTKSSEENIIN. Phosphoserine is present on Ser-511. Residues 538 to 548 are compositionally biased toward polar residues; it reads SSSCEDQSVSE. Positions 549-580 are enriched in basic and acidic residues; that stretch reads ARNKDSIEEKEVETKDENIETEKDESEYHKVE. Ser-616 carries the phosphoserine modification. Over residues 649 to 664 the composition is skewed to polar residues; the sequence is NSQFSQQSSITTASTV. Positions 649 to 672 are disordered; sequence NSQFSQQSSITTASTVDSKKDNGS. Residues 768-879 are interaction with IQG1; the sequence is EHENIPLSTH…SLWESSYELK (112 aa). Residues Ser-805 and Ser-811 each carry the phosphoserine modification. In terms of domain architecture, PH spans 1302–1413; it reads NIYKEGYLLQ…WYNKLQEVVE (112 aa).

It belongs to the BUD4 family. In terms of assembly, interacts with AXL1, IQG1 and SEC3. In terms of processing, phosphorylated by CDC28.

Its subcellular location is the bud neck. Its function is as follows. Required for establishment of the axial budding pattern in haploid cells. Cooperates with other bud site selection proteins to recognize a spatial landmark during mitosis and they subsequently become a landmark for downstream polarity establishment factors that coordinate axial budding and cytokinesis. Involved in the septin organization at the bud neck. The sequence is that of Bud site selection protein 4 (BUD4) from Saccharomyces cerevisiae (strain YJM789) (Baker's yeast).